Reading from the N-terminus, the 245-residue chain is MNRWVEKWLRVYLKCYINLILFYRNVYPPQSFDYTTYQSFNLPQFVPINRHPALIDYIEELILDVLSKLTHVYRFSICIINKKNDLCIEKYVLDFSELQHVDKDDQIITETEVFDEFRSSLNSLIMHLEKLPKVNDDTITFEAVINAIELELGHKLDRNRRVDSLEEKAEIERDSNWVKCQEDENLPDNNGFQPPKIKLTSLVGSDVGPLIIHQFSEKLISGDDKILNGVYSQYEEGESIFGSLF.

The HORMA domain maps to 3–203 (RWVEKWLRVY…PPKIKLTSLV (201 aa)).

It belongs to the MAD2 family. Forms DNA polymerase zeta with REV3. Interacts with REV1.

The protein localises to the mitochondrion. In terms of biological role, required for DNA damage induced mutagenesis. Involved in DNA repair, mitochondrial DNA repair and translesion synthesis. Has a role in the bypass of abasic (AP) sites. The chain is DNA polymerase zeta processivity subunit (REV7) from Saccharomyces cerevisiae (strain ATCC 204508 / S288c) (Baker's yeast).